The sequence spans 443 residues: MSQTNQVPKIGFVSLGCPKNLVDSERILTELRTEGYQVVPTYDDADLVIVNTCGFIDSAVQESLEAIGEALDENGKVIVTGCLGAKENQIREVHPKVLEITGPHSYEQVLSHIHHYVPKPSHNPFTSLVPEQGVKLTPRHYAYLKISEGCNHRCTFCIIPSMRGDLDSRPIGEVLNEAKRLVNAGVKELLVISQDTSAYGVDTKHQTGFWDGMPVKTSMVSLCEQLAKLGIWVRLHYVYPYPHVDEVIPLMAEGKILPYLDIPLQHASPKVLKLMKRPGSVERTLERVKRWREICPELTLRSTFIVGFPGETEEDFQMLLDFLTEARLDRVGCFKYSPVEGAKANELPDQVPEEVKEERYHRFMQLQQQISTERLQEKIGKVLPVIIDEVDEEGAIGRSMADAPEIDGAVYLNEQFDVEPGQIVRVLIEHADEYDLWGTIVEQ.

Residues 8–118 (PKIGFVSLGC…VLSHIHHYVP (111 aa)) form the MTTase N-terminal domain. 6 residues coordinate [4Fe-4S] cluster: cysteine 17, cysteine 53, cysteine 82, cysteine 150, cysteine 154, and cysteine 157. The Radical SAM core domain occupies 136-373 (LTPRHYAYLK…MQLQQQISTE (238 aa)). The 67-residue stretch at 376-442 (QEKIGKVLPV…EYDLWGTIVE (67 aa)) folds into the TRAM domain.

This sequence belongs to the methylthiotransferase family. RimO subfamily. [4Fe-4S] cluster serves as cofactor.

Its subcellular location is the cytoplasm. The enzyme catalyses L-aspartate(89)-[ribosomal protein uS12]-hydrogen + (sulfur carrier)-SH + AH2 + 2 S-adenosyl-L-methionine = 3-methylsulfanyl-L-aspartate(89)-[ribosomal protein uS12]-hydrogen + (sulfur carrier)-H + 5'-deoxyadenosine + L-methionine + A + S-adenosyl-L-homocysteine + 2 H(+). Its function is as follows. Catalyzes the methylthiolation of an aspartic acid residue of ribosomal protein uS12. This Proteus mirabilis (strain HI4320) protein is Ribosomal protein uS12 methylthiotransferase RimO.